We begin with the raw amino-acid sequence, 97 residues long: HssA/B-like protein 44 (97 aa).

2 disordered regions span residues 1–22 (MTLFSSISSISSSISSSKSSIA) and 62–97 (ASTSSGGRGGRPGRGHGGPHGHGRGGSGSGSSCGCN). The segment covering 72 to 84 (RPGRGHGGPHGHG) has biased composition (basic residues). The span at 85–97 (RGGSGSGSSCGCN) shows a compositional bias: gly residues.

It belongs to the hssA/B family.

This Dictyostelium discoideum (Social amoeba) protein is HssA/B-like protein 44 (hssl44).